A 557-amino-acid polypeptide reads, in one-letter code: Probable asparagine synthetase [glutamine-hydrolyzing] (557 aa).

Cys-2 (for GATase activity) is an active-site residue. One can recognise a Glutamine amidotransferase type-2 domain in the interval 2-188 (CGILAVHHVA…PGHYYDSETK (187 aa)). L-glutamine is bound by residues 50-54 (RLAIV), 75-77 (NGE), and Asp-99. One can recognise an Asparagine synthetase domain in the interval 196-531 (PSWWDENKIP…PRQCADTVMR (336 aa)). Residues Leu-235, Ile-280, and 354–355 (SG) each bind ATP. 2 positions are modified to phosphoserine: Ser-391 and Ser-489.

The protein localises to the cytoplasm. It is found in the nucleus. It catalyses the reaction L-aspartate + L-glutamine + ATP + H2O = L-asparagine + L-glutamate + AMP + diphosphate + H(+). The protein operates within amino-acid biosynthesis; L-asparagine biosynthesis; L-asparagine from L-aspartate (L-Gln route): step 1/1. The chain is Probable asparagine synthetase [glutamine-hydrolyzing] (asn1) from Schizosaccharomyces pombe (strain 972 / ATCC 24843) (Fission yeast).